Consider the following 388-residue polypeptide: Succinate--CoA ligase [ADP-forming] subunit beta (388 aa).

The region spanning 9-244 is the ATP-grasp domain; that stretch reads KQLFARYGLP…PSQEDSREAH (236 aa). ATP-binding positions include K46, 53–55, E99, T102, and E107; that span reads GRG. N199 and D213 together coordinate Mg(2+). Substrate contacts are provided by residues N264 and 321–323; that span reads GIV.

The protein belongs to the succinate/malate CoA ligase beta subunit family. As to quaternary structure, heterotetramer of two alpha and two beta subunits. The cofactor is Mg(2+).

It carries out the reaction succinate + ATP + CoA = succinyl-CoA + ADP + phosphate. The enzyme catalyses GTP + succinate + CoA = succinyl-CoA + GDP + phosphate. It functions in the pathway carbohydrate metabolism; tricarboxylic acid cycle; succinate from succinyl-CoA (ligase route): step 1/1. Functionally, succinyl-CoA synthetase functions in the citric acid cycle (TCA), coupling the hydrolysis of succinyl-CoA to the synthesis of either ATP or GTP and thus represents the only step of substrate-level phosphorylation in the TCA. The beta subunit provides nucleotide specificity of the enzyme and binds the substrate succinate, while the binding sites for coenzyme A and phosphate are found in the alpha subunit. The protein is Succinate--CoA ligase [ADP-forming] subunit beta of Erwinia tasmaniensis (strain DSM 17950 / CFBP 7177 / CIP 109463 / NCPPB 4357 / Et1/99).